We begin with the raw amino-acid sequence, 413 residues long: Probable short/branched chain specific acyl-CoA dehydrogenase (413 aa).

FAD contacts are provided by residues 152–161 and 186–188; these read FCLSESGSGS and WIT. S161 lines the substrate pocket. Residues Y208, Y262, and 270–273 each bind substrate; that span reads NEGR. FAD is bound by residues R298, Q309, and 366–370; that span reads SMLGG. Residue E393 is the Proton acceptor of the active site. 395–397 is an FAD binding site; it reads TSN.

It belongs to the acyl-CoA dehydrogenase family. As to quaternary structure, homotetramer. FAD serves as cofactor.

The catalysed reaction is 2-methylbutanoyl-CoA + oxidized [electron-transfer flavoprotein] + H(+) = (2E)-2-methylbut-2-enoyl-CoA + reduced [electron-transfer flavoprotein]. Its pathway is lipid metabolism; mitochondrial fatty acid beta-oxidation. The protein operates within amino-acid degradation; L-isoleucine degradation. In terms of biological role, probable short and branched chain specific acyl-CoA dehydrogenase that catalyzes the removal of one hydrogen from C-2 and C-3 of the fatty acyl-CoA thioester, resulting in the formation of trans-2-enoyl-CoA. In Dictyostelium discoideum (Social amoeba), this protein is Probable short/branched chain specific acyl-CoA dehydrogenase (acadsb).